Here is a 643-residue protein sequence, read N- to C-terminus: Threonine--tRNA ligase (643 aa).

Positions 1–61 constitute a TGS domain; the sequence is MPIITLPDGS…EQDATLEIIT (61 aa). Residues 243–534 are catalytic; it reads DHRKIGKALD…ITEEYAGFFP (292 aa). 3 residues coordinate Zn(2+): cysteine 334, histidine 385, and histidine 511.

The protein belongs to the class-II aminoacyl-tRNA synthetase family. As to quaternary structure, homodimer. It depends on Zn(2+) as a cofactor.

It is found in the cytoplasm. It carries out the reaction tRNA(Thr) + L-threonine + ATP = L-threonyl-tRNA(Thr) + AMP + diphosphate + H(+). In terms of biological role, catalyzes the attachment of threonine to tRNA(Thr) in a two-step reaction: L-threonine is first activated by ATP to form Thr-AMP and then transferred to the acceptor end of tRNA(Thr). Also edits incorrectly charged L-seryl-tRNA(Thr). The sequence is that of Threonine--tRNA ligase from Haemophilus influenzae (strain 86-028NP).